Reading from the N-terminus, the 195-residue chain is Imidazoleglycerol-phosphate dehydratase (195 aa).

It belongs to the imidazoleglycerol-phosphate dehydratase family.

Its subcellular location is the cytoplasm. It carries out the reaction D-erythro-1-(imidazol-4-yl)glycerol 3-phosphate = 3-(imidazol-4-yl)-2-oxopropyl phosphate + H2O. Its pathway is amino-acid biosynthesis; L-histidine biosynthesis; L-histidine from 5-phospho-alpha-D-ribose 1-diphosphate: step 6/9. The sequence is that of Imidazoleglycerol-phosphate dehydratase from Frankia casuarinae (strain DSM 45818 / CECT 9043 / HFP020203 / CcI3).